A 106-amino-acid chain; its full sequence is UPF0060 membrane protein Rleg2_1018 (106 aa).

4 consecutive transmembrane segments (helical) span residues 4 to 24 (IIYA…WAWL), 30 to 50 (VWWL…LTLV), 58 to 78 (TFAA…WLVE), and 86 to 106 (DIGG…GPRG).

This sequence belongs to the UPF0060 family.

The protein localises to the cell inner membrane. The chain is UPF0060 membrane protein Rleg2_1018 from Rhizobium leguminosarum bv. trifolii (strain WSM2304).